The following is a 387-amino-acid chain: Ferrochelatase (387 aa).

The Fe cation site is built by histidine 196 and glutamate 277.

The protein belongs to the ferrochelatase family.

The protein localises to the cytoplasm. The enzyme catalyses heme b + 2 H(+) = protoporphyrin IX + Fe(2+). It functions in the pathway porphyrin-containing compound metabolism; protoheme biosynthesis; protoheme from protoporphyrin-IX: step 1/1. In terms of biological role, catalyzes the ferrous insertion into protoporphyrin IX. This chain is Ferrochelatase, found in Synechococcus sp. (strain RCC307).